Consider the following 382-residue polypeptide: Mannitol-1-phosphate 5-dehydrogenase (382 aa).

Alanine 4 to glycine 15 serves as a coordination point for NAD(+).

It belongs to the mannitol dehydrogenase family.

It carries out the reaction D-mannitol 1-phosphate + NAD(+) = beta-D-fructose 6-phosphate + NADH + H(+). This Vibrio vulnificus (strain YJ016) protein is Mannitol-1-phosphate 5-dehydrogenase.